Reading from the N-terminus, the 425-residue chain is Podosporapepsin (425 aa).

The signal sequence occupies residues 1-28; it reads MVSLTDLFLASLLVPTSPWLCLPPRIDT. A propeptide spans 29 to 91 (activation peptide); it reads IDQRGGRVTL…QEEAFARIKR (63 aa). The Peptidase A1 domain occupies 108–419; it reads YVTPVTIGTP…GTNPPRIGFA (312 aa). Aspartate 126 is an active-site residue. N-linked (GlcNAc...) asparagine glycans are attached at residues asparagine 184 and asparagine 273. Residue aspartate 310 is part of the active site. Residues cysteine 346 and cysteine 381 are joined by a disulfide bond. The N-linked (GlcNAc...) asparagine glycan is linked to asparagine 370.

This sequence belongs to the peptidase A1 family.

This Podospora anserina (Pleurage anserina) protein is Podosporapepsin (PAPA).